The primary structure comprises 68 residues: MKPSEIREMSIEEIDAKIRELRLQLAKERGMLTMGTSLENPMVIRNLRRDIARLLTIKKEKLREMGKK.

It belongs to the universal ribosomal protein uL29 family.

This Pyrococcus horikoshii (strain ATCC 700860 / DSM 12428 / JCM 9974 / NBRC 100139 / OT-3) protein is Large ribosomal subunit protein uL29 (rpl29).